The chain runs to 88 residues: Elongation factor 1-beta (88 aa).

The protein belongs to the EF-1-beta/EF-1-delta family.

Functionally, promotes the exchange of GDP for GTP in EF-1-alpha/GDP, thus allowing the regeneration of EF-1-alpha/GTP that could then be used to form the ternary complex EF-1-alpha/GTP/AAtRNA. The sequence is that of Elongation factor 1-beta from Natronomonas pharaonis (strain ATCC 35678 / DSM 2160 / CIP 103997 / JCM 8858 / NBRC 14720 / NCIMB 2260 / Gabara) (Halobacterium pharaonis).